A 98-amino-acid polypeptide reads, in one-letter code: NADH-ubiquinone oxidoreductase chain 4L (98 aa).

Transmembrane regions (helical) follow at residues 2 to 22 (PSIF…TLVF), 29 to 49 (SLLC…LIIL), and 61 to 81 (ILLL…LVMV).

It belongs to the complex I subunit 4L family. In terms of assembly, core subunit of respiratory chain NADH dehydrogenase (Complex I) which is composed of 45 different subunits.

The protein localises to the mitochondrion inner membrane. It catalyses the reaction a ubiquinone + NADH + 5 H(+)(in) = a ubiquinol + NAD(+) + 4 H(+)(out). Core subunit of the mitochondrial membrane respiratory chain NADH dehydrogenase (Complex I) which catalyzes electron transfer from NADH through the respiratory chain, using ubiquinone as an electron acceptor. Part of the enzyme membrane arm which is embedded in the lipid bilayer and involved in proton translocation. The sequence is that of NADH-ubiquinone oxidoreductase chain 4L (MT-ND4L) from Propithecus diadema diadema (Diademed sifaka).